Reading from the N-terminus, the 561-residue chain is DNA ligase B (561 aa).

The N6-AMP-lysine intermediate role is filled by lysine 125.

The protein belongs to the NAD-dependent DNA ligase family. LigB subfamily.

The catalysed reaction is NAD(+) + (deoxyribonucleotide)n-3'-hydroxyl + 5'-phospho-(deoxyribonucleotide)m = (deoxyribonucleotide)n+m + AMP + beta-nicotinamide D-nucleotide.. Functionally, catalyzes the formation of phosphodiester linkages between 5'-phosphoryl and 3'-hydroxyl groups in double-stranded DNA using NAD as a coenzyme and as the energy source for the reaction. This is DNA ligase B from Salmonella paratyphi B (strain ATCC BAA-1250 / SPB7).